Here is a 316-residue protein sequence, read N- to C-terminus: HPr kinase/phosphorylase (316 aa).

Catalysis depends on residues H143 and K164. 158 to 165 contacts ATP; sequence GEAGSGKS. Residue S165 participates in Mg(2+) binding. D182 acts as the Proton acceptor; for phosphorylation activity. Proton donor; for dephosphorylation activity in catalysis. The segment at 206–215 is important for the catalytic mechanism of both phosphorylation and dephosphorylation; it reads LEVRGLGVLN. E207 is a Mg(2+) binding site. R251 is a catalytic residue. The interval 272-277 is important for the catalytic mechanism of dephosphorylation; it reads PVMPGR.

Belongs to the HPrK/P family. In terms of assembly, homohexamer. The cofactor is Mg(2+).

It catalyses the reaction [HPr protein]-L-serine + ATP = [HPr protein]-O-phospho-L-serine + ADP + H(+). The catalysed reaction is [HPr protein]-O-phospho-L-serine + phosphate + H(+) = [HPr protein]-L-serine + diphosphate. Functionally, catalyzes the ATP- as well as the pyrophosphate-dependent phosphorylation of a specific serine residue in HPr, a phosphocarrier protein of the phosphoenolpyruvate-dependent sugar phosphotransferase system (PTS). HprK/P also catalyzes the pyrophosphate-producing, inorganic phosphate-dependent dephosphorylation (phosphorolysis) of seryl-phosphorylated HPr (P-Ser-HPr). In Xanthomonas axonopodis pv. citri (strain 306), this protein is HPr kinase/phosphorylase.